Consider the following 399-residue polypeptide: Elongation factor Tu (399 aa).

The 195-residue stretch at lysine 10–glutamate 204 folds into the tr-type G domain. The interval glycine 19–threonine 26 is G1. Glycine 19–threonine 26 lines the GTP pocket. Threonine 26 contacts Mg(2+). The interval glycine 60 to asparagine 64 is G2. Residues aspartate 81–glycine 84 are G3. GTP is bound by residues aspartate 81–histidine 85 and asparagine 136–aspartate 139. Residues asparagine 136 to aspartate 139 are G4. The segment at serine 174 to leucine 176 is G5.

Belongs to the TRAFAC class translation factor GTPase superfamily. Classic translation factor GTPase family. EF-Tu/EF-1A subfamily. Monomer.

The protein resides in the cytoplasm. The catalysed reaction is GTP + H2O = GDP + phosphate + H(+). GTP hydrolase that promotes the GTP-dependent binding of aminoacyl-tRNA to the A-site of ribosomes during protein biosynthesis. In Prochlorococcus marinus (strain MIT 9313), this protein is Elongation factor Tu.